We begin with the raw amino-acid sequence, 76 residues long: Small ribosomal subunit protein bS18 (76 aa).

The protein belongs to the bacterial ribosomal protein bS18 family. In terms of assembly, part of the 30S ribosomal subunit. Forms a tight heterodimer with protein bS6.

In terms of biological role, binds as a heterodimer with protein bS6 to the central domain of the 16S rRNA, where it helps stabilize the platform of the 30S subunit. The polypeptide is Small ribosomal subunit protein bS18 (Pseudomonas aeruginosa (strain LESB58)).